The sequence spans 1025 residues: Multidrug resistance protein MdtC (1025 aa).

The next 12 helical transmembrane spans lie at 3 to 23 (FFALFIYRPVATILLSVAITL), 333 to 353 (EVEQTLIISVALVILVVFLFL), 360 to 380 (IIPAVAVPVSLIGTFAAMYLC), 387 to 407 (LSLMALTIATGFVVDDAIVVL), 431 to 451 (VGFTVLSMSLSLVAVFLPLLL), 463 to 483 (FAVTLSVAIGISLLVSLTLTP), 528 to 548 (LVGMVLLGTIALNIWLYISIP), 853 to 873 (VILIIAAIATVYIVLGILYES), 875 to 895 (VHPLTILSTLPSAGVGALLAL), 897 to 917 (LFNAPFSLIALIGIMLLIGIV), 953 to 973 (PIMMTTLAALFGALPLVLSGG), and 984 to 1004 (ITIVGGLVMSQLLTLYTTPVV).

It belongs to the resistance-nodulation-cell division (RND) (TC 2.A.6) family. MdtC subfamily. Part of a tripartite efflux system composed of MdtA, MdtB and MdtC. MdtC forms a heteromultimer with MdtB.

The protein resides in the cell inner membrane. The MdtABC tripartite complex confers resistance against novobiocin and deoxycholate. The polypeptide is Multidrug resistance protein MdtC (Escherichia coli O157:H7 (strain EC4115 / EHEC)).